The primary structure comprises 340 residues: GTPase Obg (340 aa).

The 158-residue stretch at 1–158 folds into the Obg domain; the sequence is MSFIDEAKIY…KHIILKLKII (158 aa). One can recognise an OBG-type G domain in the interval 159-325; that stretch reads SDVGIIGLPN…LSTLIKQIHK (167 aa). Residues 165–172, 190–194, 211–214, 278–281, and 306–308 contribute to the GTP site; these read GLPNAGKS, FTTLE, DIPG, NKSD, and SSI. Mg(2+) contacts are provided by S172 and T192.

The protein belongs to the TRAFAC class OBG-HflX-like GTPase superfamily. OBG GTPase family. As to quaternary structure, monomer. Mg(2+) serves as cofactor.

Its subcellular location is the cytoplasm. In terms of biological role, an essential GTPase which binds GTP, GDP and possibly (p)ppGpp with moderate affinity, with high nucleotide exchange rates and a fairly low GTP hydrolysis rate. Plays a role in control of the cell cycle, stress response, ribosome biogenesis and in those bacteria that undergo differentiation, in morphogenesis control. This chain is GTPase Obg, found in Ehrlichia canis (strain Jake).